Reading from the N-terminus, the 98-residue chain is NADH-ubiquinone oxidoreductase chain 4L (98 aa).

3 helical membrane-spanning segments follow: residues 1-21 (MSLTYFNVMLAFTMSFLGLLM), 30-50 (LLCLEGLMLSLFVLVTITILI), and 61-81 (IILLVFAACEAALGLSLLVAV).

Belongs to the complex I subunit 4L family. As to quaternary structure, core subunit of respiratory chain NADH dehydrogenase (Complex I) which is composed of 45 different subunits.

The protein resides in the mitochondrion inner membrane. It carries out the reaction a ubiquinone + NADH + 5 H(+)(in) = a ubiquinol + NAD(+) + 4 H(+)(out). Its function is as follows. Core subunit of the mitochondrial membrane respiratory chain NADH dehydrogenase (Complex I) which catalyzes electron transfer from NADH through the respiratory chain, using ubiquinone as an electron acceptor. Part of the enzyme membrane arm which is embedded in the lipid bilayer and involved in proton translocation. The polypeptide is NADH-ubiquinone oxidoreductase chain 4L (MT-ND4L) (Pipistrellus abramus (Japanese pipistrelle)).